Reading from the N-terminus, the 436-residue chain is Tol-Pal system protein TolB (436 aa).

Residues 1–28 (MMKCSFFRAILVAVGLMAAAVVATPANA) form the signal peptide.

Belongs to the TolB family. In terms of assembly, the Tol-Pal system is composed of five core proteins: the inner membrane proteins TolA, TolQ and TolR, the periplasmic protein TolB and the outer membrane protein Pal. They form a network linking the inner and outer membranes and the peptidoglycan layer.

The protein resides in the periplasm. Its function is as follows. Part of the Tol-Pal system, which plays a role in outer membrane invagination during cell division and is important for maintaining outer membrane integrity. This Rhizobium etli (strain CIAT 652) protein is Tol-Pal system protein TolB.